A 355-amino-acid chain; its full sequence is Protein pelota homolog (355 aa).

This sequence belongs to the eukaryotic release factor 1 family. Pelota subfamily. Monomer. The cofactor is a divalent metal cation.

It is found in the cytoplasm. Functionally, may function in recognizing stalled ribosomes, interact with stem-loop structures in stalled mRNA molecules, and effect endonucleolytic cleavage of the mRNA. May play a role in the release non-functional ribosomes and degradation of damaged mRNAs. Has endoribonuclease activity. This is Protein pelota homolog from Halorubrum lacusprofundi (strain ATCC 49239 / DSM 5036 / JCM 8891 / ACAM 34).